The chain runs to 121 residues: Class I hydrophobin 2 (121 aa).

The signal sequence occupies residues Met-1–Ala-18. 4 disulfide bridges follow: Cys-52–Cys-101, Cys-60–Cys-94, Cys-61–Cys-79, and Cys-102–Cys-116. N-linked (GlcNAc...) asparagine glycosylation occurs at Asn-83.

This sequence belongs to the fungal hydrophobin family. In terms of assembly, self-assembles to form functional amyloid fibrils called rodlets. Self-assembly into fibrillar rodlets occurs spontaneously at hydrophobic:hydrophilic interfaces and the rodlets further associate laterally to form amphipathic monolayers. In terms of tissue distribution, expressed in conidia and aerial hyphae.

The protein localises to the secreted. The protein resides in the cell wall. Functionally, aerial growth, conidiation, and dispersal of filamentous fungi in the environment rely upon a capability of their secreting small amphipathic proteins called hydrophobins (HPBs) with low sequence identity. Class I can self-assemble into an outermost layer of rodlet bundles on aerial cell surfaces, conferring cellular hydrophobicity that supports fungal growth, development and dispersal; whereas Class II form highly ordered films at water-air interfaces through intermolecular interactions but contribute nothing to the rodlet structure. Hcf-2 is a class I hydrophobin that is not necessary for the development of hyphae or conidia but contributes to cell surface hydrophobicity. The protein is Class I hydrophobin 2 of Passalora fulva (Tomato leaf mold).